Consider the following 488-residue polypeptide: Glutamate--tRNA ligase (488 aa).

The 'HIGH' region signature appears at 11 to 21 (PSPTGQIHIGN). Residues C108, C110, C135, and D137 each coordinate Zn(2+). A 'KMSKS' region motif is present at residues 252-256 (KLSKR). K255 is an ATP binding site.

Belongs to the class-I aminoacyl-tRNA synthetase family. Glutamate--tRNA ligase type 1 subfamily. In terms of assembly, monomer. Zn(2+) is required as a cofactor.

It is found in the cytoplasm. It catalyses the reaction tRNA(Glu) + L-glutamate + ATP = L-glutamyl-tRNA(Glu) + AMP + diphosphate. Its function is as follows. Catalyzes the attachment of glutamate to tRNA(Glu) in a two-step reaction: glutamate is first activated by ATP to form Glu-AMP and then transferred to the acceptor end of tRNA(Glu). The chain is Glutamate--tRNA ligase from Natranaerobius thermophilus (strain ATCC BAA-1301 / DSM 18059 / JW/NM-WN-LF).